Consider the following 289-residue polypeptide: Protease HtpX (289 aa).

2 consecutive transmembrane segments (helical) span residues 5–25 and 33–53; these read IVLF…VMSL and MSGL…ISLL. His-140 serves as a coordination point for Zn(2+). Glu-141 is a catalytic residue. His-144 contacts Zn(2+). The next 2 membrane-spanning stretches (helical) occupy residues 155–175 and 193–213; these read LLQG…GGFI and GIVL…TMWF. Glu-218 contacts Zn(2+).

The protein belongs to the peptidase M48B family. Requires Zn(2+) as cofactor.

It localises to the cell inner membrane. The sequence is that of Protease HtpX from Xylella fastidiosa (strain M23).